We begin with the raw amino-acid sequence, 386 residues long: Cell division protein FtsZ (386 aa).

Residues 18 to 22 (GGGVN), 105 to 107 (GTG), Glu-136, Arg-140, and Asp-184 each bind GTP.

This sequence belongs to the FtsZ family. As to quaternary structure, homodimer. Polymerizes to form a dynamic ring structure in a strictly GTP-dependent manner. Interacts directly with several other division proteins.

It is found in the cytoplasm. In terms of biological role, essential cell division protein that forms a contractile ring structure (Z ring) at the future cell division site. The regulation of the ring assembly controls the timing and the location of cell division. One of the functions of the FtsZ ring is to recruit other cell division proteins to the septum to produce a new cell wall between the dividing cells. Binds GTP and shows GTPase activity. This Mycobacterium kansasii protein is Cell division protein FtsZ.